A 230-amino-acid polypeptide reads, in one-letter code: Fibrillarin-like rRNA/tRNA 2'-O-methyltransferase (230 aa).

S-adenosyl-L-methionine is bound by residues 87–88 (TT), 105–106 (EF), 130–131 (DA), and 150–153 (DVAQ).

Belongs to the methyltransferase superfamily. Fibrillarin family. As to quaternary structure, interacts with nop5. Component of box C/D small ribonucleoprotein (sRNP) particles that contain rpl7ae, FlpA and nop5, plus a guide RNA.

Its function is as follows. Involved in pre-rRNA and tRNA processing. Utilizes the methyl donor S-adenosyl-L-methionine to catalyze the site-specific 2'-hydroxyl methylation of ribose moieties in rRNA and tRNA. Site specificity is provided by a guide RNA that base pairs with the substrate. Methylation occurs at a characteristic distance from the sequence involved in base pairing with the guide RNA. In Methanococcus vannielii (strain ATCC 35089 / DSM 1224 / JCM 13029 / OCM 148 / SB), this protein is Fibrillarin-like rRNA/tRNA 2'-O-methyltransferase.